The primary structure comprises 400 residues: Nicotinate phosphoribosyltransferase (400 aa).

Phosphohistidine; by autocatalysis is present on H220.

It belongs to the NAPRTase family. Transiently phosphorylated on a His residue during the reaction cycle. Phosphorylation strongly increases the affinity for substrates and increases the rate of nicotinate D-ribonucleotide production. Dephosphorylation regenerates the low-affinity form of the enzyme, leading to product release.

The enzyme catalyses nicotinate + 5-phospho-alpha-D-ribose 1-diphosphate + ATP + H2O = nicotinate beta-D-ribonucleotide + ADP + phosphate + diphosphate. It participates in cofactor biosynthesis; NAD(+) biosynthesis; nicotinate D-ribonucleotide from nicotinate: step 1/1. Its function is as follows. Catalyzes the synthesis of beta-nicotinate D-ribonucleotide from nicotinate and 5-phospho-D-ribose 1-phosphate at the expense of ATP. The sequence is that of Nicotinate phosphoribosyltransferase from Escherichia coli O157:H7.